The following is a 202-amino-acid chain: 3-isopropylmalate dehydratase small subunit (202 aa).

This sequence belongs to the LeuD family. LeuD type 1 subfamily. Heterodimer of LeuC and LeuD.

The enzyme catalyses (2R,3S)-3-isopropylmalate = (2S)-2-isopropylmalate. The protein operates within amino-acid biosynthesis; L-leucine biosynthesis; L-leucine from 3-methyl-2-oxobutanoate: step 2/4. Its function is as follows. Catalyzes the isomerization between 2-isopropylmalate and 3-isopropylmalate, via the formation of 2-isopropylmaleate. In Rhizobium johnstonii (strain DSM 114642 / LMG 32736 / 3841) (Rhizobium leguminosarum bv. viciae), this protein is 3-isopropylmalate dehydratase small subunit.